Here is a 924-residue protein sequence, read N- to C-terminus: Probable dipeptidyl-aminopeptidase B (924 aa).

The segment covering 1–12 (MPSTYSDDNTLR) has biased composition (polar residues). The tract at residues 1-102 (MPSTYSDDNT…RSNQRSSADG (102 aa)) is disordered. Over 1-111 (MPSTYSDDNT…GQRMDRSLRR (111 aa)) the chain is Cytoplasmic. Over residues 14 to 23 (GLDRFRDHSP) the composition is skewed to basic and acidic residues. The span at 31 to 43 (SQETDSTVSTTSI) shows a compositional bias: polar residues. Basic and acidic residues predominate over residues 47–58 (RIQERLDTKEFP). Over residues 87 to 100 (NASPSSRSNQRSSA) the composition is skewed to low complexity. A helical; Signal-anchor for type II membrane protein membrane pass occupies residues 112-132 (WLFIVSGALVATWVIGLIFFV). Topologically, residues 133–924 (SSKAYKPSSS…GMKRRALPTA (792 aa)) are vacuolar. N-linked (GlcNAc...) asparagine glycosylation is found at Asn-231 and Asn-364. The Charge relay system role is filled by Ser-768. N-linked (GlcNAc...) asparagine glycosylation occurs at Asn-827. Catalysis depends on charge relay system residues Asp-845 and His-878.

This sequence belongs to the peptidase S9B family.

Its subcellular location is the vacuole membrane. The catalysed reaction is Release of an N-terminal dipeptide, Xaa-Yaa-|-Zaa-, from a polypeptide, preferentially when Yaa is Pro, provided Zaa is neither Pro nor hydroxyproline.. Functionally, type IV dipeptidyl-peptidase which removes N-terminal dipeptides sequentially from polypeptides having unsubstituted N-termini provided that the penultimate residue is proline. This is Probable dipeptidyl-aminopeptidase B (dapB) from Neurospora crassa (strain ATCC 24698 / 74-OR23-1A / CBS 708.71 / DSM 1257 / FGSC 987).